Here is a 320-residue protein sequence, read N- to C-terminus: o-succinylbenzoate synthase (320 aa).

Catalysis depends on Lys-133, which acts as the Proton donor. Asp-161, Glu-190, and Asp-213 together coordinate Mg(2+). Lys-235 functions as the Proton acceptor in the catalytic mechanism.

Belongs to the mandelate racemase/muconate lactonizing enzyme family. MenC type 1 subfamily. A divalent metal cation is required as a cofactor.

It catalyses the reaction (1R,6R)-6-hydroxy-2-succinyl-cyclohexa-2,4-diene-1-carboxylate = 2-succinylbenzoate + H2O. It functions in the pathway quinol/quinone metabolism; 1,4-dihydroxy-2-naphthoate biosynthesis; 1,4-dihydroxy-2-naphthoate from chorismate: step 4/7. It participates in quinol/quinone metabolism; menaquinone biosynthesis. In terms of biological role, converts 2-succinyl-6-hydroxy-2,4-cyclohexadiene-1-carboxylate (SHCHC) to 2-succinylbenzoate (OSB). The polypeptide is o-succinylbenzoate synthase (Citrobacter koseri (strain ATCC BAA-895 / CDC 4225-83 / SGSC4696)).